The sequence spans 656 residues: Histidine decarboxylase (656 aa).

Residues Y84 and H197 each coordinate substrate. K308 is subject to N6-(pyridoxal phosphate)lysine. Residues S343 and S362 each carry the phosphoserine; by PKA modification. A disordered region spans residues 481-502 (HCTSQPSPRAKNLIPPPVTRDS).

The protein belongs to the group II decarboxylase family. As to quaternary structure, homodimer. It depends on pyridoxal 5'-phosphate as a cofactor. Post-translationally, may be post-translationally processed. As to expression, brain, glandular regions of the stomach, mast cells and fetal liver.

It carries out the reaction L-histidine + H(+) = histamine + CO2. Its pathway is amine and polyamine biosynthesis; histamine biosynthesis; histamine from L-histidine: step 1/1. Its activity is regulated as follows. Phosphorylation of brain HDC by cAMP-dependent protein kinase leads to enzyme inactivation. In terms of biological role, catalyzes the biosynthesis of histamine from histidine. The protein is Histidine decarboxylase (Hdc) of Rattus norvegicus (Rat).